An 83-amino-acid chain; its full sequence is Turripeptide Lol11.2 (83 aa).

The first 27 residues, Met1–Thr27, serve as a signal peptide directing secretion.

Belongs to the conopeptide I2-like superfamily. Post-translationally, contains 4 disulfide bonds. In terms of tissue distribution, expressed by the venom duct.

It localises to the secreted. In terms of biological role, acts as a neurotoxin by inhibiting voltage-gated potassium channels (Kv). The protein is Turripeptide Lol11.2 of Iotyrris olangoensis (Sea snail).